The following is a 257-amino-acid chain: UPF0246 protein Sbal195_1149 (257 aa).

It belongs to the UPF0246 family.

This Shewanella baltica (strain OS195) protein is UPF0246 protein Sbal195_1149.